We begin with the raw amino-acid sequence, 54 residues long: Ribulose bisphosphate carboxylase large chain (54 aa).

Residues 1–2 (MS) constitute a propeptide that is removed on maturation. N-acetylproline is present on proline 3. Lysine 14 carries the post-translational modification N6,N6,N6-trimethyllysine.

Belongs to the RuBisCO large chain family. Type I subfamily. As to quaternary structure, heterohexadecamer of 8 large chains and 8 small chains.

The protein localises to the plastid. It is found in the chloroplast. It catalyses the reaction 2 (2R)-3-phosphoglycerate + 2 H(+) = D-ribulose 1,5-bisphosphate + CO2 + H2O. The catalysed reaction is D-ribulose 1,5-bisphosphate + O2 = 2-phosphoglycolate + (2R)-3-phosphoglycerate + 2 H(+). Its function is as follows. RuBisCO catalyzes two reactions: the carboxylation of D-ribulose 1,5-bisphosphate, the primary event in carbon dioxide fixation, as well as the oxidative fragmentation of the pentose substrate in the photorespiration process. Both reactions occur simultaneously and in competition at the same active site. The protein is Ribulose bisphosphate carboxylase large chain (rbcL) of Ilex ciliospinosa (Sichuan holly).